The primary structure comprises 324 residues: Succinylglutamate desuccinylase (324 aa).

3 residues coordinate Zn(2+): His53, Glu56, and His148. Residue Glu211 is part of the active site.

The protein belongs to the AspA/AstE family. Succinylglutamate desuccinylase subfamily. It depends on Zn(2+) as a cofactor.

It catalyses the reaction N-succinyl-L-glutamate + H2O = L-glutamate + succinate. The protein operates within amino-acid degradation; L-arginine degradation via AST pathway; L-glutamate and succinate from L-arginine: step 5/5. Its function is as follows. Transforms N(2)-succinylglutamate into succinate and glutamate. This chain is Succinylglutamate desuccinylase, found in Acinetobacter baumannii (strain SDF).